The chain runs to 188 residues: Ion-translocating oxidoreductase complex subunit B (188 aa).

A hydrophobic region spans residues 1 to 26 (MMSLWIAIGALSTLALVSGVVLGFAA). In terms of domain architecture, 4Fe-4S spans 32–91 (DEDPVVEQVDAILPQSQCGQCGYPGCRPYAEAVSTGGEKINKCAPGGEQVMLKLAELLAV). [4Fe-4S] cluster contacts are provided by Cys49, Cys52, Cys57, Cys74, Cys117, Cys120, Cys123, Cys127, Cys147, Cys150, Cys153, and Cys157. 4Fe-4S ferredoxin-type domains follow at residues 108-137 (KVAF…GATR) and 138-167 (AMHT…MIPV).

The protein belongs to the 4Fe4S bacterial-type ferredoxin family. RnfB subfamily. In terms of assembly, the complex is composed of six subunits: RnfA, RnfB, RnfC, RnfD, RnfE and RnfG. [4Fe-4S] cluster serves as cofactor.

Its subcellular location is the cell inner membrane. Part of a membrane-bound complex that couples electron transfer with translocation of ions across the membrane. The sequence is that of Ion-translocating oxidoreductase complex subunit B from Yersinia pestis bv. Antiqua (strain Antiqua).